A 192-amino-acid chain; its full sequence is Fe/S biogenesis protein NfuA (192 aa).

Residues Cys-150 and Cys-153 each contribute to the [4Fe-4S] cluster site.

It belongs to the NfuA family. In terms of assembly, homodimer. The cofactor is [4Fe-4S] cluster.

In terms of biological role, involved in iron-sulfur cluster biogenesis. Binds a 4Fe-4S cluster, can transfer this cluster to apoproteins, and thereby intervenes in the maturation of Fe/S proteins. Could also act as a scaffold/chaperone for damaged Fe/S proteins. This Ruthia magnifica subsp. Calyptogena magnifica protein is Fe/S biogenesis protein NfuA.